Here is a 123-residue protein sequence, read N- to C-terminus: Large ribosomal subunit protein uL18 (123 aa).

The protein belongs to the universal ribosomal protein uL18 family. Part of the 50S ribosomal subunit; part of the 5S rRNA/L5/L18/L25 subcomplex. Contacts the 5S and 23S rRNAs.

This is one of the proteins that bind and probably mediate the attachment of the 5S RNA into the large ribosomal subunit, where it forms part of the central protuberance. The polypeptide is Large ribosomal subunit protein uL18 (Protochlamydia amoebophila (strain UWE25)).